We begin with the raw amino-acid sequence, 202 residues long: Small ribosomal subunit protein uS4c (202 aa).

The region spanning 90-153 (MRLDNIIFRL…KSQAIISKNI (64 aa)) is the S4 RNA-binding domain.

Belongs to the universal ribosomal protein uS4 family. In terms of assembly, part of the 30S ribosomal subunit. Contacts protein S5. The interaction surface between S4 and S5 is involved in control of translational fidelity.

It is found in the plastid. The protein resides in the chloroplast. One of the primary rRNA binding proteins, it binds directly to 16S rRNA where it nucleates assembly of the body of the 30S subunit. Its function is as follows. With S5 and S12 plays an important role in translational accuracy. The polypeptide is Small ribosomal subunit protein uS4c (rps4) (Splachnum sphaericum (Pinkstink dung moss)).